The following is a 455-amino-acid chain: Phosphomethylpyrimidine synthase (455 aa).

Substrate-binding positions include asparagine 80, methionine 109, tyrosine 139, histidine 175, serine 195–glycine 197, aspartate 236–arginine 239, and glutamate 275. Residue histidine 279 participates in Zn(2+) binding. Substrate is bound at residue tyrosine 302. Histidine 343 contacts Zn(2+). The [4Fe-4S] cluster site is built by cysteine 423, cysteine 426, and cysteine 431.

It belongs to the ThiC family. [4Fe-4S] cluster is required as a cofactor.

It carries out the reaction 5-amino-1-(5-phospho-beta-D-ribosyl)imidazole + S-adenosyl-L-methionine = 4-amino-2-methyl-5-(phosphooxymethyl)pyrimidine + CO + 5'-deoxyadenosine + formate + L-methionine + 3 H(+). The protein operates within cofactor biosynthesis; thiamine diphosphate biosynthesis. Functionally, catalyzes the synthesis of the hydroxymethylpyrimidine phosphate (HMP-P) moiety of thiamine from aminoimidazole ribotide (AIR) in a radical S-adenosyl-L-methionine (SAM)-dependent reaction. In Synechococcus sp. (strain JA-2-3B'a(2-13)) (Cyanobacteria bacterium Yellowstone B-Prime), this protein is Phosphomethylpyrimidine synthase.